A 134-amino-acid chain; its full sequence is Small ribosomal subunit protein uS9 (134 aa).

Positions 114-134 (EVERKKYGLKKARRAPQFSKR) are disordered. Basic residues predominate over residues 120 to 134 (YGLKKARRAPQFSKR).

This sequence belongs to the universal ribosomal protein uS9 family.

This chain is Small ribosomal subunit protein uS9, found in Thermotoga neapolitana (strain ATCC 49049 / DSM 4359 / NBRC 107923 / NS-E).